Here is a 103-residue protein sequence, read N- to C-terminus: Protein translation factor SUI1 homolog (103 aa).

It belongs to the SUI1 family.

The chain is Protein translation factor SUI1 homolog from Methanocaldococcus jannaschii (strain ATCC 43067 / DSM 2661 / JAL-1 / JCM 10045 / NBRC 100440) (Methanococcus jannaschii).